The following is a 117-amino-acid chain: Large ribosomal subunit protein bL19 (117 aa).

This sequence belongs to the bacterial ribosomal protein bL19 family.

Functionally, this protein is located at the 30S-50S ribosomal subunit interface and may play a role in the structure and function of the aminoacyl-tRNA binding site. In Desulfosudis oleivorans (strain DSM 6200 / JCM 39069 / Hxd3) (Desulfococcus oleovorans), this protein is Large ribosomal subunit protein bL19.